The following is a 547-amino-acid chain: CTP synthase (547 aa).

Positions 1-265 (MARFIFITGG…DQAVLDAFGI (265 aa)) are amidoligase domain. Residue Ser13 coordinates CTP. Ser13 contacts UTP. ATP is bound by residues 14–19 (SLGKGL) and Asp71. Asp71 and Glu139 together coordinate Mg(2+). CTP-binding positions include 146–148 (DIE), 186–191 (KTKPTQ), and Lys222. UTP contacts are provided by residues 186-191 (KTKPTQ) and Lys222. The Glutamine amidotransferase type-1 domain maps to 291–546 (KVAIVGKYTQ…VRAAKENSRL (256 aa)). Gly353 lines the L-glutamine pocket. The active-site Nucleophile; for glutamine hydrolysis is Cys380. Residues 381-384 (LGMQ), Glu404, and Arg474 each bind L-glutamine. Active-site residues include His519 and Glu521.

It belongs to the CTP synthase family. Homotetramer.

It carries out the reaction UTP + L-glutamine + ATP + H2O = CTP + L-glutamate + ADP + phosphate + 2 H(+). The catalysed reaction is L-glutamine + H2O = L-glutamate + NH4(+). It catalyses the reaction UTP + NH4(+) + ATP = CTP + ADP + phosphate + 2 H(+). The protein operates within pyrimidine metabolism; CTP biosynthesis via de novo pathway; CTP from UDP: step 2/2. Its activity is regulated as follows. Allosterically activated by GTP, when glutamine is the substrate; GTP has no effect on the reaction when ammonia is the substrate. The allosteric effector GTP functions by stabilizing the protein conformation that binds the tetrahedral intermediate(s) formed during glutamine hydrolysis. Inhibited by the product CTP, via allosteric rather than competitive inhibition. Functionally, catalyzes the ATP-dependent amination of UTP to CTP with either L-glutamine or ammonia as the source of nitrogen. Regulates intracellular CTP levels through interactions with the four ribonucleotide triphosphates. The polypeptide is CTP synthase (Jannaschia sp. (strain CCS1)).